The chain runs to 394 residues: Elongation factor Tu (394 aa).

Positions 10 to 204 constitute a tr-type G domain; sequence KPHINVGTIG…ALDNYIPEPK (195 aa). The G1 stretch occupies residues 19–26; the sequence is GHVDHGKT. 19-26 contributes to the GTP binding site; it reads GHVDHGKT. Thr-26 is a Mg(2+) binding site. A G2 region spans residues 60-64; that stretch reads GITIN. Residues 81–84 are G3; the sequence is DCPG. GTP is bound by residues 81–85 and 136–139; these read DCPGH and NKCD. The interval 136 to 139 is G4; sequence NKCD. The G5 stretch occupies residues 174-176; sequence SAL.

This sequence belongs to the TRAFAC class translation factor GTPase superfamily. Classic translation factor GTPase family. EF-Tu/EF-1A subfamily. In terms of assembly, monomer.

It localises to the cytoplasm. The catalysed reaction is GTP + H2O = GDP + phosphate + H(+). Its function is as follows. GTP hydrolase that promotes the GTP-dependent binding of aminoacyl-tRNA to the A-site of ribosomes during protein biosynthesis. The chain is Elongation factor Tu from Blochmanniella pennsylvanica (strain BPEN).